A 78-amino-acid polypeptide reads, in one-letter code: HssA/B-like protein 29 (78 aa).

A disordered region spans residues 1–31; that stretch reads MTLFSSITSISKTNTSSKSSLNSFSGSSLSM.

This sequence belongs to the hssA/B family.

This Dictyostelium discoideum (Social amoeba) protein is HssA/B-like protein 29 (hssl29).